The sequence spans 224 residues: uncharacterized protein (224 aa).

Residues His57, His59, Asp61, His62, His138, Asp162, and His203 each coordinate Zn(2+).

It belongs to the metallo-beta-lactamase superfamily. Glyoxalase II family. It depends on Zn(2+) as a cofactor.

This is an uncharacterized protein from Mycobacterium tuberculosis (strain CDC 1551 / Oshkosh).